The primary structure comprises 477 residues: UDP-N-acetylmuramate--L-alanine ligase (477 aa).

118–124 is a binding site for ATP; it reads GTHGKTS.

Belongs to the MurCDEF family.

The protein resides in the cytoplasm. The catalysed reaction is UDP-N-acetyl-alpha-D-muramate + L-alanine + ATP = UDP-N-acetyl-alpha-D-muramoyl-L-alanine + ADP + phosphate + H(+). Its pathway is cell wall biogenesis; peptidoglycan biosynthesis. Cell wall formation. The sequence is that of UDP-N-acetylmuramate--L-alanine ligase from Corynebacterium diphtheriae (strain ATCC 700971 / NCTC 13129 / Biotype gravis).